A 321-amino-acid chain; its full sequence is MSRPERLQPGVKLRDADKVSRIPVKVVPSERETMLRKPDWLRVKLPSSSQRIDEIKQALRSNGLHSVCEEASCPNLAECFNHGTATFMILGAICTRRCPFCDVAHGRPLKPDAQEPKKLAQTIKDMKLKYVVITSVDRDDLRDGGAQHFADCIREIRLLNPEIKIETLVPDFRGRIDAALDILATEPPDVFNHNLETAPMHYRKARPGANYQWSLDLLKKFKERHPDVPTKSGLMMGLGETNEEIAQVLKDLRAHNVEMLTLGQYLQPSKFHLPVERYVPPAEFDELRVFAEEIGFTHAACGPMVRSSYHADLQAQGKEVK.

[4Fe-4S] cluster-binding residues include cysteine 68, cysteine 73, cysteine 79, cysteine 94, cysteine 98, cysteine 101, and serine 308. Residues 80–297 enclose the Radical SAM core domain; it reads FNHGTATFMI…RVFAEEIGFT (218 aa).

It belongs to the radical SAM superfamily. Lipoyl synthase family. The cofactor is [4Fe-4S] cluster.

The protein resides in the cytoplasm. It carries out the reaction [[Fe-S] cluster scaffold protein carrying a second [4Fe-4S](2+) cluster] + N(6)-octanoyl-L-lysyl-[protein] + 2 oxidized [2Fe-2S]-[ferredoxin] + 2 S-adenosyl-L-methionine + 4 H(+) = [[Fe-S] cluster scaffold protein] + N(6)-[(R)-dihydrolipoyl]-L-lysyl-[protein] + 4 Fe(3+) + 2 hydrogen sulfide + 2 5'-deoxyadenosine + 2 L-methionine + 2 reduced [2Fe-2S]-[ferredoxin]. The protein operates within protein modification; protein lipoylation via endogenous pathway; protein N(6)-(lipoyl)lysine from octanoyl-[acyl-carrier-protein]: step 2/2. Functionally, catalyzes the radical-mediated insertion of two sulfur atoms into the C-6 and C-8 positions of the octanoyl moiety bound to the lipoyl domains of lipoate-dependent enzymes, thereby converting the octanoylated domains into lipoylated derivatives. The polypeptide is Lipoyl synthase (Shewanella woodyi (strain ATCC 51908 / MS32)).